The following is a 222-amino-acid chain: Ribonuclease S-3 (222 aa).

Residues 1–22 (MFRLQLISAFFILLFSLSPVSA) form the signal peptide. The cysteines at positions 38 and 44 are disulfide-linked. Asn-50 carries an N-linked (GlcNAc...) asparagine glycan. The active-site Proton donor is His-54. Residues His-54, 92–93 (QM), 109–110 (HE), and 113–114 (RH) each bind RNA. Disulfide bonds link Cys-68–Cys-117, Cys-177–Cys-210, and Cys-193–Cys-204. Glu-110 is a catalytic residue. His-114 functions as the Proton acceptor in the catalytic mechanism.

The protein belongs to the RNase T2 family.

The protein resides in the secreted. It is found in the extracellular space. The enzyme catalyses a ribonucleotidyl-ribonucleotide-RNA + H2O = a 3'-end 3'-phospho-ribonucleotide-RNA + a 5'-end dephospho-ribonucleoside-RNA + H(+). Self-incompatibility (SI) is the inherited ability of a flowering plant to prevent self-fertilization by discriminating between self and non-self pollen during pollination. In many species, self-incompatibility is controlled by the single, multiallelic locus S. This is Ribonuclease S-3 (S3) from Petunia hybrida (Petunia).